The following is a 251-amino-acid chain: DNA polymerase sliding clamp 2 (251 aa).

The protein belongs to the PCNA family. As to quaternary structure, heterotrimer. The subunits circularize to form a toroid; DNA passes through its center. Replication factor C (RFC) is required to load the toroid on the DNA.

In terms of biological role, sliding clamp subunit that acts as a moving platform for DNA processing. Responsible for tethering the catalytic subunit of DNA polymerase and other proteins to DNA during high-speed replication. The protein is DNA polymerase sliding clamp 2 of Aeropyrum pernix (strain ATCC 700893 / DSM 11879 / JCM 9820 / NBRC 100138 / K1).